The following is a 375-amino-acid chain: F-box/kelch-repeat protein At4g39240 (375 aa).

Positions 1–15 (MPFSAASSSSVSSIA) are enriched in low complexity. Residues 1–27 (MPFSAASSSSVSSIAEEPPPKKQHDPS) are disordered. The region spanning 31-77 (SSYLLLLPDEIILNCLARLPKCYYPVISLVSKTFRRLIASPEIYVER) is the F-box domain. Kelch repeat units lie at residues 140-186 (EIYV…FFDG), 187-232 (KLYV…RSFA), and 275-321 (KIYT…GNLA).

This chain is F-box/kelch-repeat protein At4g39240, found in Arabidopsis thaliana (Mouse-ear cress).